We begin with the raw amino-acid sequence, 771 residues long: Protein translocase subunit SecA 2 (771 aa).

ATP contacts are provided by residues Gln-91, 109-113, and Asp-496; that span reads GEGKT.

It belongs to the SecA family. As to quaternary structure, monomer and homodimer. Part of the essential Sec protein translocation apparatus which comprises SecA, SecYEG and auxiliary proteins SecDF. Other proteins may also be involved.

It is found in the cell membrane. Its subcellular location is the cytoplasm. The catalysed reaction is ATP + H2O + cellular proteinSide 1 = ADP + phosphate + cellular proteinSide 2.. Part of the Sec protein translocase complex. Interacts with the SecYEG preprotein conducting channel. Has a central role in coupling the hydrolysis of ATP to the transfer of proteins into and across the cell membrane, serving as an ATP-driven molecular motor driving the stepwise translocation of polypeptide chains across the membrane. The sequence is that of Protein translocase subunit SecA 2 from Corynebacterium jeikeium (strain K411).